A 269-amino-acid chain; its full sequence is Energy-coupling factor transporter ATP-binding protein EcfA1 (269 aa).

The 235-residue stretch at 8 to 242 folds into the ABC transporter domain; the sequence is IVFKNVSFQY…AEELTTIGLD (235 aa). Residue 42–49 participates in ATP binding; sequence GHNGSGKS.

The protein belongs to the ABC transporter superfamily. Energy-coupling factor EcfA family. As to quaternary structure, forms a stable energy-coupling factor (ECF) transporter complex composed of 2 membrane-embedded substrate-binding proteins (S component), 2 ATP-binding proteins (A component) and 2 transmembrane proteins (T component).

Its subcellular location is the cell membrane. In terms of biological role, ATP-binding (A) component of a common energy-coupling factor (ECF) ABC-transporter complex. Unlike classic ABC transporters this ECF transporter provides the energy necessary to transport a number of different substrates. In Staphylococcus aureus (strain MSSA476), this protein is Energy-coupling factor transporter ATP-binding protein EcfA1.